The sequence spans 305 residues: UPF0612 protein C337.02c (305 aa).

Coiled-coil stretches lie at residues 27–63 and 120–207; these read IERYERSVDSTLLEIDENKREALEKNILRKDRKMKYE and NDMN…DARS.

It belongs to the UPF0612 family.

The chain is UPF0612 protein C337.02c from Schizosaccharomyces pombe (strain 972 / ATCC 24843) (Fission yeast).